The sequence spans 118 residues: Large ribosomal subunit protein uL22 (118 aa).

It belongs to the universal ribosomal protein uL22 family. As to quaternary structure, part of the 50S ribosomal subunit.

This protein binds specifically to 23S rRNA; its binding is stimulated by other ribosomal proteins, e.g. L4, L17, and L20. It is important during the early stages of 50S assembly. It makes multiple contacts with different domains of the 23S rRNA in the assembled 50S subunit and ribosome. Its function is as follows. The globular domain of the protein is located near the polypeptide exit tunnel on the outside of the subunit, while an extended beta-hairpin is found that lines the wall of the exit tunnel in the center of the 70S ribosome. This chain is Large ribosomal subunit protein uL22, found in Pediococcus pentosaceus (strain ATCC 25745 / CCUG 21536 / LMG 10740 / 183-1w).